The chain runs to 214 residues: Adenylate kinase (214 aa).

An ATP-binding site is contributed by 10–15; the sequence is GAGKGT. Residues 30-59 form an NMP region; that stretch reads STGDMLRAAVKSGSELGKQAKDIMDAGKLV. AMP-binding positions include threonine 31, arginine 36, 57–59, 85–88, and glutamine 92; these read KLV and GFPR. The interval 122-159 is LID; the sequence is GRRVHAPSGRVYHVKFNPPKVEGKDDVTGEELTTRKDD. Residues arginine 123 and 132-133 contribute to the ATP site; that span reads VY. 2 residues coordinate AMP: arginine 156 and arginine 167. An N6-acetyllysine modification is found at lysine 192. Lysine 200 is an ATP binding site.

This sequence belongs to the adenylate kinase family. Monomer.

The protein localises to the cytoplasm. It carries out the reaction AMP + ATP = 2 ADP. It participates in purine metabolism; AMP biosynthesis via salvage pathway; AMP from ADP: step 1/1. Functionally, catalyzes the reversible transfer of the terminal phosphate group between ATP and AMP. Plays an important role in cellular energy homeostasis and in adenine nucleotide metabolism. The chain is Adenylate kinase from Escherichia coli O45:K1 (strain S88 / ExPEC).